Reading from the N-terminus, the 772-residue chain is DnaJ homolog subfamily C member 16 (772 aa).

An N-terminal signal peptide occupies residues 1 to 25; that stretch reads MELKRLGVSWRFLMVLVLILQSLSA. At 26 to 533 the chain is on the cytoplasmic side; the sequence is LDFDPYRVLG…ESLLHSNWRE (508 aa). Residues 29–93 enclose the J domain; that stretch reads DPYRVLGVSR…EKRTNYDHYG (65 aa). The 127-residue stretch at 119 to 245 folds into the Thioredoxin domain; the sequence is FDESFFHFPF…LRQFVESLLP (127 aa). A helical; Anchor for type IV membrane protein membrane pass occupies residues 534–554; that stretch reads MMPLLSLIFSALFILFGTVMV. Residues 555–772 are Extracellular-facing; that stretch reads QAFSDSNEER…FYIPSWPELD (218 aa). Positions 560-591 are disordered; that stretch reads SNEERESHPADKEEVPEKAGKTEPSFTKESSS. Positions 561–580 are enriched in basic and acidic residues; it reads NEERESHPADKEEVPEKAGK. An N-linked (GlcNAc...) asparagine glycan is attached at N629.

It is found in the endoplasmic reticulum membrane. Plays an important role in regulating the size of autophagosomes during the formation process. The polypeptide is DnaJ homolog subfamily C member 16 (Dnajc16) (Mus musculus (Mouse)).